Here is a 116-residue protein sequence, read N- to C-terminus: Ribosome-binding factor A (116 aa).

Belongs to the RbfA family. Monomer. Binds 30S ribosomal subunits, but not 50S ribosomal subunits or 70S ribosomes.

It localises to the cytoplasm. Functionally, one of several proteins that assist in the late maturation steps of the functional core of the 30S ribosomal subunit. Associates with free 30S ribosomal subunits (but not with 30S subunits that are part of 70S ribosomes or polysomes). Required for efficient processing of 16S rRNA. May interact with the 5'-terminal helix region of 16S rRNA. The polypeptide is Ribosome-binding factor A (Streptococcus equi subsp. zooepidemicus (strain H70)).